A 478-amino-acid polypeptide reads, in one-letter code: Glycogen synthase (478 aa).

Lys20 is a binding site for ADP-alpha-D-glucose.

Belongs to the glycosyltransferase 1 family. Bacterial/plant glycogen synthase subfamily.

It catalyses the reaction [(1-&gt;4)-alpha-D-glucosyl](n) + ADP-alpha-D-glucose = [(1-&gt;4)-alpha-D-glucosyl](n+1) + ADP + H(+). It participates in glycan biosynthesis; glycogen biosynthesis. Functionally, synthesizes alpha-1,4-glucan chains using ADP-glucose. This Cereibacter sphaeroides (strain ATCC 17023 / DSM 158 / JCM 6121 / CCUG 31486 / LMG 2827 / NBRC 12203 / NCIMB 8253 / ATH 2.4.1.) (Rhodobacter sphaeroides) protein is Glycogen synthase.